The chain runs to 258 residues: Maintenance of carboxysome distribution protein A (258 aa).

ATP-binding residues include Gly-11, Gly-12, Gln-13, Gly-14, Lys-15, Thr-16, Thr-17, Gln-40, Glu-147, Lys-151, Phe-182, Arg-183, Leu-216, Glu-217, Ser-218, and Tyr-221. Thr-16 lines the Mg(2+) pocket.

This sequence belongs to the ParA family. McdA subfamily. As to quaternary structure, homodimerizes in the presence of ATP, making extra nucleotide contacts than with ADP or AMP-PNP. Each subunit binds 1 ATP molecule; Glu-147, Lys-151 and Arg-183 cross the dimer interface to contact ATP in the other subunit, while Phe-182, Arg-183 and Tyr-221 stack with the adenine base in their own subunit. Forms a complex with McdB.

It is found in the cytoplasm. It localises to the nucleoid. The catalysed reaction is ATP + H2O = ADP + phosphate + H(+). In terms of biological role, mcdA and McdB together mediate carboxysome (Cb) spacing, size, ultrastructure and probably inheritance in the cell, together they prevent Cb aggregation. McdA is an ATPase that forms dynamic gradients on the nucleoid in response to adapter protein McdB, which associates with carboxysomes. The interplay between McdA gradients on the nucleoid and McdB-bound carboxysomes result in the equal spacing of Cbs along the cell length. Binds DNA saturably and strongly in the presence of Mg(2+)ATP; without ATP, DNA-binding is very poor (tested with a mutant that should not be able to hydrolyze ATP, Asp-38-Ala). Decreasing the NaCl concentration increases DNA binding. Functionally, incorrect positioning (aggregation) of carboxysomes results in reduced CO(2) fixation by encapsulated ribulose-1,5-bisphosphate carboxylase (RuBisCO, cbbL/cbbS), which leads to slower growth. In Gloeothece citriformis (strain PCC 7424) (Cyanothece sp. (strain PCC 7424)), this protein is Maintenance of carboxysome distribution protein A.